The primary structure comprises 448 residues: Probable ribonuclease FAU-1 (448 aa).

This sequence belongs to the FAU-1 family.

Probable RNase involved in rRNA stability through maturation and/or degradation of precursor rRNAs. Binds to RNA in loop regions with AU-rich sequences. The chain is Probable ribonuclease FAU-1 from Pyrobaculum calidifontis (strain DSM 21063 / JCM 11548 / VA1).